The following is a 471-amino-acid chain: Variant surface glycoprotein WRATAT A (471 aa).

The signal sequence occupies residues 1–18 (MSVLFLLLAITRTASVKA). N-linked (GlcNAc...) asparagine glycosylation is found at Asn61 and Asn133. Positions 373 to 457 (QEQTLATTGT…ANTTGSSNSF (85 aa)) are disordered. The segment covering 379–392 (TTGTKSSSPQSTQQ) has biased composition (low complexity). Intrachain disulfides connect Cys401/Cys414 and Cys410/Cys427. Positions 401-447 (CNDKAKETECNSPCKWDKEEKDEKKRCKLSEEGKQAEKENQEGKDGK) are enriched in basic and acidic residues. Over residues 448–457 (ANTTGSSNSF) the composition is skewed to polar residues. A glycan (N-linked (GlcNAc...) asparagine) is linked at Asn449. Ser454 is lipidated: GPI-anchor amidated serine. A propeptide spans 455-471 (NSFVIKTSPLLLAVLLL) (removed in mature form).

The protein localises to the cell membrane. In terms of biological role, VSG forms a coat on the surface of the parasite. The trypanosome evades the immune response of the host by expressing a series of antigenically distinct VSGs from an estimated 1000 VSG genes. The chain is Variant surface glycoprotein WRATAT A from Trypanosoma brucei rhodesiense.